Here is a 346-residue protein sequence, read N- to C-terminus: Fructose-1,6-bisphosphatase class 1 (346 aa).

E96, D119, L121, and D122 together coordinate Mg(2+). Residues 122 to 125 (DGSS), N214, Y247, and K277 each bind substrate. E283 contacts Mg(2+).

Belongs to the FBPase class 1 family. In terms of assembly, homotetramer. The cofactor is Mg(2+).

It is found in the cytoplasm. It catalyses the reaction beta-D-fructose 1,6-bisphosphate + H2O = beta-D-fructose 6-phosphate + phosphate. Its pathway is carbohydrate biosynthesis; gluconeogenesis. The sequence is that of Fructose-1,6-bisphosphatase class 1 from Cytophaga hutchinsonii (strain ATCC 33406 / DSM 1761 / CIP 103989 / NBRC 15051 / NCIMB 9469 / D465).